The primary structure comprises 208 residues: MKNLLCAVMLTSPLLYSTAVFADDAQQLRNTLVNTASLKTDFKQTVTDVNKKVIQTGSGILALAHPNQFYWHLTSPDESQIVADGKDLWIYNPFAEEVVIMDFAEAINASPIALLVHRDDTTWSQYSVTKKQDCYDIRPKAIDSGIVTVSVCFKNSQLTKFNVLDDKGNLSQFDLSNQKVITTEDKALFKFVLPENVDIDDQRLKTLN.

The signal sequence occupies residues 1–22 (MKNLLCAVMLTSPLLYSTAVFA).

It belongs to the LolA family. Monomer.

The protein resides in the periplasm. Functionally, participates in the translocation of lipoproteins from the inner membrane to the outer membrane. Only forms a complex with a lipoprotein if the residue after the N-terminal Cys is not an aspartate (The Asp acts as a targeting signal to indicate that the lipoprotein should stay in the inner membrane). The polypeptide is Outer-membrane lipoprotein carrier protein (Shewanella sp. (strain W3-18-1)).